The chain runs to 792 residues: uncharacterized protein (792 aa).

25 tandem repeats follow at residues 91–102 (NSSTNATTTASI), 103–114 (NVRTSATTTASI), 115–126 (NVRTSATTTEST), 127–138 (NSNTNATTTEST), 139–150 (NSSTNATTTASI), 151–162 (NVRTSATTTEST), 163–174 (NSSTNATTTASI), 175–186 (NVRTSATTTEST), 187–198 (NSSTNATTTASI), 199–210 (NVRTSATTTEST), 211–222 (NSNTNASTNATT), 223–234 (NSSTNATTTAST), 235–246 (NVRTSATTNATT), 247–258 (NSSTNATTTAST), 259–270 (NVRTSATTTAST), 271–282 (NVRTSATTTASI), 283–294 (NVRTSATTTESI), 295–306 (NSSTNATTTEST), 307–318 (NSNTSATTTEST), 319–330 (DSNTNATTTASI), 331–342 (NVRTSATTTEST), 343–354 (NSNTSATTTEST), 355–366 (DSNTSATTTAST), 367–378 (NSSTNATTTAST), and 379–390 (NSSTNATTTEST). Positions 91–390 (NSSTNATTTA…STNATTTEST (300 aa)) are 25 X 12 AA tandem repeat of N-[SV]-[RS]-T-[NS]-A-T-T-T-[AE]-[ST]-[IT]. The interval 113-417 (SINVRTSATT…RFHPVTDINK (305 aa)) is disordered. Low complexity predominate over residues 118–393 (TSATTTESTN…ATTTESTNAS (276 aa)). The span at 394-417 (AKEDANKDGNAEDNRFHPVTDINK) shows a compositional bias: basic and acidic residues.

This is an uncharacterized protein from Saccharomyces cerevisiae (strain ATCC 204508 / S288c) (Baker's yeast).